The chain runs to 308 residues: MDALKSAGRALIRSPSLAKQSWGGGGRHRKLPENWTDTRETLLEGMLFSLKYLGMTLVEQPKGEELSAAAIKRIVATAKASGKKLQKVTLKVSPRGIILTDNLTNQLIENVSIYRISYCTADKMHDKVFAYIAQSQHNQSLECHAFLCTKRKMAQAVTLTVAQAFKVAFEFWQVSKEEKEKRDKASQEGGDVLGARQDCTPSLKSLVATGNLLDLEETAKAPLSTVSANTTNMDEVPRPQALSGSSVVWELDDGLDEAFSRLAQSRTNPQVLDTGLTAQDMHYAQCLSPVDWDKPDSSGTEQDDLFSF.

Residue Met-1 is modified to N-acetylmethionine. A phosphoserine mark is found at Ser-14, Ser-186, and Ser-202. The region spanning 42-196 (LLEGMLFSLK…QEGGDVLGAR (155 aa)) is the PID domain. The short motif at 212-216 (LLDLE) is the Clathrin box element. The AP-2 complex binding stretch occupies residues 249-276 (WELDDGLDEAFSRLAQSRTNPQVLDTGL). A [DE]-X(1,2)-F-X-X-[FL]-X-X-X-R motif motif is present at residues 257 to 266 (EAFSRLAQSR).

In terms of assembly, interacts (via PID domain) with LDLR (via NPXY motif). Binds to soluble clathrin trimers. Interacts with AP2B1; the interaction mediates the association with the AP-2 complex. Interacts with VLDLR. Interacts with LRP2. As to expression, expressed at high levels in the kidney, liver, and placenta, with lower levels detectable in brain, heart, muscle, colon, spleen, intestine, lung, and leukocytes.

Its subcellular location is the cytoplasm. Adapter protein (clathrin-associated sorting protein (CLASP)) required for efficient endocytosis of the LDL receptor (LDLR) in polarized cells such as hepatocytes and lymphocytes, but not in non-polarized cells (fibroblasts). May be required for LDL binding and internalization but not for receptor clustering in coated pits. May facilitate the endocytosis of LDLR and LDLR-LDL complexes from coated pits by stabilizing the interaction between the receptor and the structural components of the pits. May also be involved in the internalization of other LDLR family members. Binds to phosphoinositides, which regulate clathrin bud assembly at the cell surface. Required for trafficking of LRP2 to the endocytic recycling compartment which is necessary for LRP2 proteolysis, releasing a tail fragment which translocates to the nucleus and mediates transcriptional repression. The chain is Low density lipoprotein receptor adapter protein 1 from Homo sapiens (Human).